The chain runs to 119 residues: Ribonuclease P protein component (119 aa).

The protein belongs to the RnpA family. In terms of assembly, consists of a catalytic RNA component (M1 or rnpB) and a protein subunit.

The enzyme catalyses Endonucleolytic cleavage of RNA, removing 5'-extranucleotides from tRNA precursor.. In terms of biological role, RNaseP catalyzes the removal of the 5'-leader sequence from pre-tRNA to produce the mature 5'-terminus. It can also cleave other RNA substrates such as 4.5S RNA. The protein component plays an auxiliary but essential role in vivo by binding to the 5'-leader sequence and broadening the substrate specificity of the ribozyme. The protein is Ribonuclease P protein component of Streptococcus equi subsp. zooepidemicus (strain MGCS10565).